The following is a 361-amino-acid chain: Molybdenum import ATP-binding protein ModC (361 aa).

The ABC transporter domain maps to 1 to 228 (MLTINIEKQL…EQMRPWVPLQ (228 aa)). 31–38 (GRSGAGKT) contributes to the ATP binding site. The 68-residue stretch at 289 to 356 (RSSIRNVLKG…IKGVTMTQMD (68 aa)) folds into the Mop domain.

Belongs to the ABC transporter superfamily. Molybdate importer (TC 3.A.1.8) family. As to quaternary structure, the complex is composed of two ATP-binding proteins (ModC), two transmembrane proteins (ModB) and a solute-binding protein (ModA).

It is found in the cell inner membrane. It catalyses the reaction molybdate(out) + ATP + H2O = molybdate(in) + ADP + phosphate + H(+). Part of the ABC transporter complex ModABC involved in molybdenum import. Responsible for energy coupling to the transport system. The protein is Molybdenum import ATP-binding protein ModC of Shewanella oneidensis (strain ATCC 700550 / JCM 31522 / CIP 106686 / LMG 19005 / NCIMB 14063 / MR-1).